We begin with the raw amino-acid sequence, 573 residues long: Potassium-transporting ATPase potassium-binding subunit (573 aa).

10 helical membrane passes run 6-26 (ILFA…GSYI), 66-86 (FFSL…ILLL), 135-155 (ALAV…IALI), 177-197 (VFWI…FQGV), 257-277 (IQMV…GKWV), 283-303 (GWLI…VMTI), 382-402 (IFGG…LAVF), 428-448 (MFAL…AAVI), 493-513 (ITIA…VIML), and 537-557 (FIFA…TIFP).

Belongs to the KdpA family. The system is composed of three essential subunits: KdpA, KdpB and KdpC.

It localises to the cell inner membrane. Functionally, part of the high-affinity ATP-driven potassium transport (or Kdp) system, which catalyzes the hydrolysis of ATP coupled with the electrogenic transport of potassium into the cytoplasm. This subunit binds the periplasmic potassium ions and delivers the ions to the membrane domain of KdpB through an intramembrane tunnel. The polypeptide is Potassium-transporting ATPase potassium-binding subunit (Francisella tularensis subsp. mediasiatica (strain FSC147)).